Here is a 361-residue protein sequence, read N- to C-terminus: Nuclear pore complex protein NUP43 (361 aa).

A disordered region spans residues 51 to 73 (IQSLDPNPRGNHNTNPLIESLSS). 3 WD repeats span residues 132–173 (FHVG…YRKV), 177–215 (NGLVAYRAVKWASPTEFVTGGYGFGLQLWDQRKSGEAVS), and 225–265 (KTSA…QPIV).

In terms of assembly, part of the nuclear pore complex (NPC). The NPC has an eight-fold symmetrical structure comprising a central transport channel and two rings, the cytoplasmic and nuclear rings, to which eight filaments are attached. The cytoplasmic filaments have loose ends, while the nuclear filaments are joined in a distal ring, forming a nuclear basket. NPCs are highly dynamic in configuration and composition, and can be devided in 3 subcomplexes, the NUP62 subcomplex, the NUP107-160 subcomplex and the NUP93 subcomplex, containing approximately 30 different nucleoporin proteins.

Its subcellular location is the nucleus envelope. It localises to the nucleus. It is found in the nuclear pore complex. This Arabidopsis thaliana (Mouse-ear cress) protein is Nuclear pore complex protein NUP43.